A 252-amino-acid chain; its full sequence is Small ribosomal subunit protein uS2A (252 aa).

An N-acetylserine modification is found at Ser-2. The disordered stretch occupies residues 209–252; the sequence is EVEQQAAEETTSTGADAEESKEEVAEGQNEASEWAEENTEAVSW. Residues 241–252 show a composition bias toward acidic residues; that stretch reads EWAEENTEAVSW.

It belongs to the universal ribosomal protein uS2 family. In terms of assembly, component of the small ribosomal subunit. Mature ribosomes consist of a small (40S) and a large (60S) subunit. The 40S subunit contains about 33 different proteins and 1 molecule of RNA (18S). The 60S subunit contains about 49 different proteins and 3 molecules of RNA (25S, 5.8S and 5S). Interacts with RPS21.

The protein resides in the cytoplasm. Its function is as follows. Required for the assembly and/or stability of the 40S ribosomal subunit. Required for the processing of the 20S rRNA-precursor to mature 18S rRNA in a late step of the maturation of 40S ribosomal subunits. The protein is Small ribosomal subunit protein uS2A of Vanderwaltozyma polyspora (strain ATCC 22028 / DSM 70294 / BCRC 21397 / CBS 2163 / NBRC 10782 / NRRL Y-8283 / UCD 57-17) (Kluyveromyces polysporus).